The following is a 116-amino-acid chain: RutC family protein HI_1627 (116 aa).

This sequence belongs to the RutC family.

This Haemophilus influenzae (strain ATCC 51907 / DSM 11121 / KW20 / Rd) protein is RutC family protein HI_1627.